Reading from the N-terminus, the 646-residue chain is Stage V sporulation protein D (646 aa).

Serine 294 (acyl-ester intermediate) is an active-site residue. Residues 580–638 enclose the PASTA domain; it reads DTKTIEVPNVVGMSVSDLESLLVNLNVDASGKGSKIVKQSPAAGTKVKEGSKIRVYLTE.

This sequence belongs to the transpeptidase family.

It localises to the cell membrane. The enzyme catalyses Preferential cleavage: (Ac)2-L-Lys-D-Ala-|-D-Ala. Also transpeptidation of peptidyl-alanyl moieties that are N-acyl substituents of D-alanine.. Its pathway is cell wall biogenesis; peptidoglycan biosynthesis. Functionally, penicillin-binding protein with an unknown catalytic activity. May have a specialized role in the morphogenesis of spore cortex, which is a modified form of peptidoglycan. Spore cortex formation is determined primarily by the mother cell. The protein is Stage V sporulation protein D (spoVD) of Bacillus subtilis (strain 168).